A 410-amino-acid chain; its full sequence is Putative odorant receptor 65c (410 aa).

The Cytoplasmic portion of the chain corresponds to 1 to 59 (MDIRGNVHRFVKFYIDGWKHFRDPTMESSYSAVYYWREQMKAMFLYTTSKERQMPYRSS). The helical transmembrane segment at 60 to 80 (WHTLVIIQATVCFLTMCYGVT) threads the bilayer. Residues 81–92 (ESLGDKVQMGRD) lie on the Extracellular side of the membrane. A helical transmembrane segment spans residues 93-113 (IAFIIGFFYIAFKIYYFQWYG). Residues 114 to 148 (DELDEVVEALETFHPWAQKGPGAVDYRTAKRWYFT) are Cytoplasmic-facing. A helical membrane pass occupies residues 149-169 (LAFFLASSWLVFLCIFILLLI). Residues 170–222 (TSPLWVHQQILPLHAAFPFQWHEKSIHPISHAFIYLFQTWNVMYFLTWLVCIE) lie on the Extracellular side of the membrane. Residues 223–243 (GLSVSIYVEITFAIEVLCLEL) form a helical membrane-spanning segment. The Cytoplasmic portion of the chain corresponds to 244 to 279 (RHLHQRCHGYEQLRLETNRLVQFHQKIVHILDHTNK). A helical membrane pass occupies residues 280 to 300 (VFHGTLIMQMGVNFFLVSLSV). The Extracellular portion of the chain corresponds to 301–312 (LEAMEARKDPKV). A helical membrane pass occupies residues 313 to 333 (VAQFAVLMLLALGHLSMWSYF). The Cytoplasmic portion of the chain corresponds to 334-385 (GDLLSQKSLTISEAAYEAYDPIKGSKDVYRDLCLIIRRGQEPLIMRASPFPS). The helical transmembrane segment at 386 to 406 (FNFINYSAILNQCYGILTFLL) threads the bilayer. Topologically, residues 407–410 (KTLD) are extracellular.

It belongs to the insect chemoreceptor superfamily. Heteromeric odorant receptor channel (TC 1.A.69) family. Or49a subfamily. As to quaternary structure, interacts with Orco. Complexes exist early in the endomembrane system in olfactory sensory neurons (OSNs), coupling these complexes to the conserved ciliary trafficking pathway.

It is found in the cell membrane. Its function is as follows. Odorant receptor which mediates acceptance or avoidance behavior, depending on its substrates. The odorant receptor repertoire encodes a large collection of odor stimuli that vary widely in identity, intensity, and duration. May form a complex with Orco to form odorant-sensing units, providing sensitive and prolonged odorant signaling and calcium permeability. This Drosophila melanogaster (Fruit fly) protein is Putative odorant receptor 65c (Or65c).